A 244-amino-acid chain; its full sequence is Carboxy-S-adenosyl-L-methionine synthase (244 aa).

Residues Y41, 66 to 68 (GCS), N134, and R201 contribute to the S-adenosyl-L-methionine site.

Belongs to the class I-like SAM-binding methyltransferase superfamily. Cx-SAM synthase family. As to quaternary structure, homodimer.

It catalyses the reaction prephenate + S-adenosyl-L-methionine = carboxy-S-adenosyl-L-methionine + 3-phenylpyruvate + H2O. Functionally, catalyzes the conversion of S-adenosyl-L-methionine (SAM) to carboxy-S-adenosyl-L-methionine (Cx-SAM). The protein is Carboxy-S-adenosyl-L-methionine synthase of Cellvibrio japonicus (strain Ueda107) (Pseudomonas fluorescens subsp. cellulosa).